A 386-amino-acid chain; its full sequence is Cell division protein FtsZ (386 aa).

GTP-binding positions include Gly18–Asn22, Gly105–Gly107, Glu136, Arg140, and Asp184.

The protein belongs to the FtsZ family. As to quaternary structure, homodimer. Polymerizes to form a dynamic ring structure in a strictly GTP-dependent manner. Interacts directly with several other division proteins.

Its subcellular location is the cytoplasm. In terms of biological role, essential cell division protein that forms a contractile ring structure (Z ring) at the future cell division site. The regulation of the ring assembly controls the timing and the location of cell division. One of the functions of the FtsZ ring is to recruit other cell division proteins to the septum to produce a new cell wall between the dividing cells. Binds GTP and shows GTPase activity. This chain is Cell division protein FtsZ, found in Mycobacterium kansasii.